The sequence spans 439 residues: Na(+)/H(+) antiporter NhaA 1 (439 aa).

11 helical membrane-spanning segments follow: residues 14-34 (ITGG…ANLA), 60-80 (ISLH…FIGL), 98-118 (ALPL…YYFF), 127-147 (GWGI…AMVG), 156-176 (IFLS…IAIF), 179-199 (EQIF…LAVA), 213-233 (IGLI…TIAG), 303-323 (HPIS…GVIV), 335-355 (IVLG…FLFA), 375-395 (IIGT…ISDL), and 408-428 (VAVL…LISA).

Belongs to the NhaA Na(+)/H(+) (TC 2.A.33) antiporter family.

The protein localises to the cell inner membrane. The enzyme catalyses Na(+)(in) + 2 H(+)(out) = Na(+)(out) + 2 H(+)(in). Its function is as follows. Na(+)/H(+) antiporter that extrudes sodium in exchange for external protons. The chain is Na(+)/H(+) antiporter NhaA 1 from Psychromonas ingrahamii (strain DSM 17664 / CCUG 51855 / 37).